The following is an 878-amino-acid chain: Probable glucan endo-1,3-beta-glucosidase ARB_02077 (878 aa).

A signal peptide spans Met1 to Ala27. 4 N-linked (GlcNAc...) asparagine glycosylation sites follow: Asn228, Asn257, Asn290, and Asn297. The tract at residues Ala373–Lys472 is disordered. Residues Ala400–Ile416 show a composition bias toward pro residues. Positions Val433–Ser452 are enriched in low complexity. Residues Asn505, Asn659, Asn795, and Asn862 are each glycosylated (N-linked (GlcNAc...) asparagine).

The protein belongs to the glycosyl hydrolase 55 family.

It is found in the secreted. It catalyses the reaction Hydrolysis of (1-&gt;3)-beta-D-glucosidic linkages in (1-&gt;3)-beta-D-glucans.. Probable glucan endo-1,3-beta-glucosidase involved in the hydrolysis of fungal cell wall. Classified as a small-oligosaccharide-producing type based its the end products: glucose, laminaribiose or laminaritetraose. This is Probable glucan endo-1,3-beta-glucosidase ARB_02077 from Arthroderma benhamiae (strain ATCC MYA-4681 / CBS 112371) (Trichophyton mentagrophytes).